The following is a 223-amino-acid chain: 7-cyano-7-deazaguanine synthase (223 aa).

ATP is bound at residue I11 to A21. C189, C197, C200, and C203 together coordinate Zn(2+).

This sequence belongs to the QueC family. Zn(2+) is required as a cofactor.

It catalyses the reaction 7-carboxy-7-deazaguanine + NH4(+) + ATP = 7-cyano-7-deazaguanine + ADP + phosphate + H2O + H(+). It participates in purine metabolism; 7-cyano-7-deazaguanine biosynthesis. Its function is as follows. Catalyzes the ATP-dependent conversion of 7-carboxy-7-deazaguanine (CDG) to 7-cyano-7-deazaguanine (preQ(0)). The protein is 7-cyano-7-deazaguanine synthase of Campylobacter fetus subsp. fetus (strain 82-40).